The following is a 276-amino-acid chain: Streptothricin hydrolase (276 aa).

Cysteine 176 serves as the catalytic Nucleophile. The tract at residues 250–276 is disordered; it reads PEAPAAAAAPAAGTGLSPAGPPPAPAR. Residues 252–267 show a composition bias toward low complexity; it reads APAAAAAPAAGTGLSP.

This sequence belongs to the isochorismatase family. In terms of assembly, homodimer. Does not require a metal cofactor. is required as a cofactor.

It carries out the reaction streptothricin F + H2O = streptothricin F acid. Catalyzes the hydrolysis of the amide bond of streptolidine lactam, thereby conferring streptothricin (ST) resistance. Can hydrolyze streptothricin-F and streptothricin-D. However, this strain is believed to be a ST nonproducer, which raises the possibility that its true role may not be its involvement in self-resistance to STs. May catalyze the hydrolysis of naturally occurring cyclic amide compounds that are structurally related to STs. In Streptomyces noursei (Streptomyces albulus), this protein is Streptothricin hydrolase (sttH).